We begin with the raw amino-acid sequence, 270 residues long: Glutamate racemase (270 aa).

Substrate is bound by residues 14-15 (DS) and 46-47 (YG). Cys-77 (proton donor/acceptor) is an active-site residue. 78–79 (NT) provides a ligand contact to substrate. Catalysis depends on Cys-186, which acts as the Proton donor/acceptor. 187 to 188 (TH) is a binding site for substrate.

This sequence belongs to the aspartate/glutamate racemases family.

It carries out the reaction L-glutamate = D-glutamate. It functions in the pathway cell wall biogenesis; peptidoglycan biosynthesis. Its function is as follows. Provides the (R)-glutamate required for cell wall biosynthesis. This is Glutamate racemase from Trichodesmium erythraeum (strain IMS101).